The following is a 32-amino-acid chain: MNIVIVQLGSLALITLAGPIIIVLLFLKQGNL.

The chain crosses the membrane as a helical span at residues 3-23 (IVIVQLGSLALITLAGPIIIV).

This sequence belongs to the Psb30/Ycf12 family. In terms of assembly, PSII is composed of 1 copy each of membrane proteins PsbA, PsbB, PsbC, PsbD, PsbE, PsbF, PsbH, PsbI, PsbJ, PsbK, PsbL, PsbM, PsbT, PsbY, PsbZ, Psb30/Ycf12, peripheral proteins of the oxygen-evolving complex and a large number of cofactors. It forms dimeric complexes.

It is found in the plastid. The protein resides in the chloroplast thylakoid membrane. A core subunit of photosystem II (PSII), probably helps stabilize the reaction center. This Euglena viridis (Cercaria viridis) protein is Photosystem II reaction center protein Psb30.